The chain runs to 161 residues: Large ribosomal subunit protein bL17 (161 aa).

Positions Ala132 to Leu144 are enriched in basic and acidic residues. The segment at Ala132–Ala161 is disordered. Over residues Glu145–Ala161 the composition is skewed to low complexity.

The protein belongs to the bacterial ribosomal protein bL17 family. As to quaternary structure, part of the 50S ribosomal subunit. Contacts protein L32.

This is Large ribosomal subunit protein bL17 from Koribacter versatilis (strain Ellin345).